Reading from the N-terminus, the 350-residue chain is Phenylalanine--tRNA ligase alpha subunit (350 aa).

Mg(2+) is bound at residue glutamate 271.

It belongs to the class-II aminoacyl-tRNA synthetase family. Phe-tRNA synthetase alpha subunit type 1 subfamily. In terms of assembly, tetramer of two alpha and two beta subunits. It depends on Mg(2+) as a cofactor.

Its subcellular location is the cytoplasm. The catalysed reaction is tRNA(Phe) + L-phenylalanine + ATP = L-phenylalanyl-tRNA(Phe) + AMP + diphosphate + H(+). This Paracidovorax citrulli (strain AAC00-1) (Acidovorax citrulli) protein is Phenylalanine--tRNA ligase alpha subunit.